The sequence spans 285 residues: Putative sugar uptake protein lin0444 (285 aa).

9 helical membrane passes run 2–21 (SIYL…PIIA), 31–50 (QLLG…FWIL), 55–77 (TVLS…LLQF), 111–133 (WQTV…GVVM), 146–168 (SVSF…YVVT), 172–194 (FDVT…AIGI), 207–229 (VTFN…LATA), 233–255 (VATS…ILIF), and 262–284 (LEWT…LSLL).

This sequence belongs to the GRP transporter (TC 2.A.7.5) family.

It localises to the cell membrane. This Listeria innocua serovar 6a (strain ATCC BAA-680 / CLIP 11262) protein is Putative sugar uptake protein lin0444.